Consider the following 73-residue polypeptide: Translation initiation factor IF-1 (73 aa).

The S1-like domain occupies 1-73; that stretch reads MAKKDGVIEI…TRGRIVYRYK (73 aa).

The protein belongs to the IF-1 family. In terms of assembly, component of the 30S ribosomal translation pre-initiation complex which assembles on the 30S ribosome in the order IF-2 and IF-3, IF-1 and N-formylmethionyl-tRNA(fMet); mRNA recruitment can occur at any time during PIC assembly.

It is found in the cytoplasm. Its function is as follows. One of the essential components for the initiation of protein synthesis. Stabilizes the binding of IF-2 and IF-3 on the 30S subunit to which N-formylmethionyl-tRNA(fMet) subsequently binds. Helps modulate mRNA selection, yielding the 30S pre-initiation complex (PIC). Upon addition of the 50S ribosomal subunit IF-1, IF-2 and IF-3 are released leaving the mature 70S translation initiation complex. The chain is Translation initiation factor IF-1 from Clavibacter michiganensis subsp. michiganensis (strain NCPPB 382).